Reading from the N-terminus, the 1109-residue chain is Carbamoyl phosphate synthase large chain (1109 aa).

Residues 1-402 (MPKRTDLKSV…ALQKALRSLE (402 aa)) form a carboxyphosphate synthetic domain region. The ATP site is built by Arg-129, Arg-169, Gly-175, Gly-176, Glu-208, Ile-210, Glu-215, Gly-241, Val-242, His-243, Gln-285, and Glu-299. Residues 133–328 (KGVVERCGAE…IAKIATKLSL (196 aa)) form the ATP-grasp 1 domain. The Mg(2+) site is built by Gln-285, Glu-299, and Asn-301. Gln-285, Glu-299, and Asn-301 together coordinate Mn(2+). An oligomerization domain region spans residues 403 to 546 (QKGSQLDFSS…YHYSAYDEED (144 aa)). Positions 547-950 (EVALHSKPSI…AFAKSQAGAN (404 aa)) are carbamoyl phosphate synthetic domain. The ATP-grasp 2 domain maps to 677–868 (SRVLDKAGLV…MAKAAALIGT (192 aa)). Residues Arg-713, Arg-752, Leu-754, Glu-759, Gly-784, Ile-785, His-786, Ser-787, Gln-827, and Glu-839 each contribute to the ATP site. Mg(2+)-binding residues include Gln-827, Glu-839, and Asn-841. Mn(2+) is bound by residues Gln-827, Glu-839, and Asn-841. The MGS-like domain occupies 951–1096 (NALPTEGKVF…QEHAAALGES (146 aa)). The segment at 951-1109 (NALPTEGKVF…AAAKADLQHA (159 aa)) is allosteric domain.

This sequence belongs to the CarB family. Composed of two chains; the small (or glutamine) chain promotes the hydrolysis of glutamine to ammonia, which is used by the large (or ammonia) chain to synthesize carbamoyl phosphate. Tetramer of heterodimers (alpha,beta)4. Mg(2+) is required as a cofactor. The cofactor is Mn(2+).

It carries out the reaction hydrogencarbonate + L-glutamine + 2 ATP + H2O = carbamoyl phosphate + L-glutamate + 2 ADP + phosphate + 2 H(+). The catalysed reaction is hydrogencarbonate + NH4(+) + 2 ATP = carbamoyl phosphate + 2 ADP + phosphate + 2 H(+). It functions in the pathway amino-acid biosynthesis; L-arginine biosynthesis; carbamoyl phosphate from bicarbonate: step 1/1. It participates in pyrimidine metabolism; UMP biosynthesis via de novo pathway; (S)-dihydroorotate from bicarbonate: step 1/3. Large subunit of the glutamine-dependent carbamoyl phosphate synthetase (CPSase). CPSase catalyzes the formation of carbamoyl phosphate from the ammonia moiety of glutamine, carbonate, and phosphate donated by ATP, constituting the first step of 2 biosynthetic pathways, one leading to arginine and/or urea and the other to pyrimidine nucleotides. The large subunit (synthetase) binds the substrates ammonia (free or transferred from glutamine from the small subunit), hydrogencarbonate and ATP and carries out an ATP-coupled ligase reaction, activating hydrogencarbonate by forming carboxy phosphate which reacts with ammonia to form carbamoyl phosphate. The polypeptide is Carbamoyl phosphate synthase large chain (Pseudarthrobacter chlorophenolicus (strain ATCC 700700 / DSM 12829 / CIP 107037 / JCM 12360 / KCTC 9906 / NCIMB 13794 / A6) (Arthrobacter chlorophenolicus)).